We begin with the raw amino-acid sequence, 255 residues long: Aliphatic sulfonates import ATP-binding protein SsuB (255 aa).

The region spanning 12–233 (LLLNAVSKHY…RLGSVRLAEL (222 aa)) is the ABC transporter domain. Position 44 to 51 (44 to 51 (GRSGGGKS)) interacts with ATP.

It belongs to the ABC transporter superfamily. Aliphatic sulfonates importer (TC 3.A.1.17.2) family. The complex is composed of two ATP-binding proteins (SsuB), two transmembrane proteins (SsuC) and a solute-binding protein (SsuA).

Its subcellular location is the cell inner membrane. The enzyme catalyses ATP + H2O + aliphatic sulfonate-[sulfonate-binding protein]Side 1 = ADP + phosphate + aliphatic sulfonateSide 2 + [sulfonate-binding protein]Side 1.. In terms of biological role, part of the ABC transporter complex SsuABC involved in aliphatic sulfonates import. Responsible for energy coupling to the transport system. In Escherichia coli O6:H1 (strain CFT073 / ATCC 700928 / UPEC), this protein is Aliphatic sulfonates import ATP-binding protein SsuB.